Consider the following 225-residue polypeptide: Membrane protein (225 aa).

Residues 1–20 lie on the Virion surface side of the membrane; it reads MPNETNCTLDFEQSVQLFKE. A helical membrane pass occupies residues 21–41; that stretch reads YNLFITAFLLFLTIILQYGYA. Residues 42-51 lie on the Intravirion side of the membrane; sequence TRTKVIYTLK. A helical transmembrane segment spans residues 52-72; sequence MIVLWCFWPLNIAVGVISCTY. Over 73-77 the chain is Virion surface; it reads PPNTG. The chain crosses the membrane as a helical span at residues 78–98; that stretch reads GLVVAIILTVFACLSFVGYWI. Residues 99 to 225 are Intravirion-facing; the sequence is QSIRLFKRCR…VATGGSSLYT (127 aa).

Belongs to the gammacoronaviruses M protein family. Homomultimer. Interacts with envelope E protein in the budding compartment of the host cell, which is located between endoplasmic reticulum and the Golgi complex. Forms a complex with HE and S proteins. Interacts with nucleocapsid N protein. This interaction probably participates in RNA packaging into the virus.

It is found in the virion membrane. It localises to the host Golgi apparatus membrane. Functionally, component of the viral envelope that plays a central role in virus morphogenesis and assembly via its interactions with other viral proteins. The sequence is that of Membrane protein from Avian infectious bronchitis virus (strain Beaudette US) (IBV).